The primary structure comprises 462 residues: Probable peptidoglycan glycosyltransferase FtsW (462 aa).

Residues 1-63 (MGCIVCSDGI…VRDGRKFDAP (63 aa)) are Cytoplasmic-facing. Residues 64-84 (LLWMVVLMTAFGLLMIYSASV) traverse the membrane as a helical segment. The Periplasmic portion of the chain corresponds to 85 to 97 (YLASKEGGDQFFY). A helical transmembrane segment spans residues 98–118 (LTRQAGFVVAGLIASGFLWFL). Topologically, residues 119 to 125 (CRMRTWR) are cytoplasmic. A helical transmembrane segment spans residues 126 to 146 (RLVPWIFALSGLLLVAVLIAG). Topologically, residues 147-160 (REINGATRWIPLGP) are periplasmic. The chain crosses the membrane as a helical span at residues 161 to 181 (LNFQPTELFKLAVILYLASLF). The Cytoplasmic segment spans residues 182–227 (TRREEVLRSMESLGWQSIWRGTANLIMSATNPQARRETLEMYGRFR). Transmembrane regions (helical) follow at residues 228 to 248 (AIIL…VQPD) and 249 to 269 (FGSF…AGLP). Topologically, residues 270–271 (WK) are cytoplasmic. Residues 272 to 292 (YFFVLVGSVLGGMVLMITAAP) form a helical membrane-spanning segment. The Periplasmic portion of the chain corresponds to 293 to 348 (YRVQRVVAFLDPWKDPQGAGYQLTHSLMAIGRGEWFGMGLGASLSKRGFLPEAHTD). The helical transmembrane segment at 349-369 (FIFAIIAEEFGFFGMCVLIFC) threads the bilayer. The Cytoplasmic segment spans residues 370–386 (YGWLVVRAFSIGKQSRD). A helical membrane pass occupies residues 387–409 (LGLTFNAYIASGIGIWIGIQSFF). Residues 410–424 (NIGVNIGALPTKGLT) lie on the Periplasmic side of the membrane. The helical transmembrane segment at 425 to 445 (LPLMSYGGSSVFFMLISMMLL) threads the bilayer. Residues 446 to 462 (LRIDYENRRKMRGYRVE) lie on the Cytoplasmic side of the membrane.

Belongs to the SEDS family. FtsW subfamily.

Its subcellular location is the cell inner membrane. The catalysed reaction is [GlcNAc-(1-&gt;4)-Mur2Ac(oyl-L-Ala-gamma-D-Glu-L-Lys-D-Ala-D-Ala)](n)-di-trans,octa-cis-undecaprenyl diphosphate + beta-D-GlcNAc-(1-&gt;4)-Mur2Ac(oyl-L-Ala-gamma-D-Glu-L-Lys-D-Ala-D-Ala)-di-trans,octa-cis-undecaprenyl diphosphate = [GlcNAc-(1-&gt;4)-Mur2Ac(oyl-L-Ala-gamma-D-Glu-L-Lys-D-Ala-D-Ala)](n+1)-di-trans,octa-cis-undecaprenyl diphosphate + di-trans,octa-cis-undecaprenyl diphosphate + H(+). It participates in cell wall biogenesis; peptidoglycan biosynthesis. Functionally, peptidoglycan polymerase that is essential for cell division. This chain is Probable peptidoglycan glycosyltransferase FtsW, found in Neisseria gonorrhoeae (strain NCCP11945).